Consider the following 1185-residue polypeptide: Mucin-6 (1185 aa).

Disulfide bonds link C1–C132 and C23–C168. In terms of domain architecture, VWFD 1 spans 1 to 169 (CSTWGGGHFS…KMDDPSEICL (169 aa)). N223 carries an N-linked (GlcNAc...) (complex) asparagine glycan. In terms of domain architecture, TIL 1 spans 257–312 (CSANQIYEECGSPCIKTCSNPEYSCSSHCTYGCFCPEGTVLDDISKNRTCVHLEQC). One can recognise a VWFD 2 domain in the interval 350 to 534 (GRCSLEGGSF…AMERETDPCA (185 aa)). 2 cysteine pairs are disulfide-bonded: C352/C488 and C374/C533. TIL domains follow at residues 619–676 (CTGN…KSHC) and 737–782 (GATC…PEEC). A VWFD 3 domain is found at 821–993 (STCNLYGEGH…NSWKENPLCG (173 aa)). 4 cysteine pairs are disulfide-bonded: C823/C957, C845/C992, C854/C954, and C872/C879. N930 carries N-linked (GlcNAc...) (complex) asparagine glycosylation. The span at 1160–1178 (PTATQPTSPSTSSASTVLT) shows a compositional bias: low complexity. Residues 1160–1185 (PTATQPTSPSTSSASTVLTETTNPPV) are disordered.

Multimer; disulfide-linked. N-glycosylated with N-acetylglucosamine (6.7%), N-acetylgalactosamine (0.6%), galactose (1.8%), mannose (4.6%), N-acetylneuraminic acid (1.0%) and sulfate-containing glycans (0.7%).

Its subcellular location is the secreted. In terms of biological role, ovomucin, the glycoprotein responsible for the gel properties of egg white, is composed for 2 subunits, alpha-ovomucin/MUC5B and beta-ovomucin/MUC6. This chain is Mucin-6 (MUC6), found in Gallus gallus (Chicken).